Consider the following 66-residue polypeptide: Phylloseptin-Az2 (66 aa).

Positions 1–22 (MAFLKKSLFLVLFLGLVSLSIC) are cleaved as a signal peptide. Positions 23-44 (EEEKRETEEKENEQEDDDKSEE) are excised as a propeptide. Positions 24–45 (EEKRETEEKENEQEDDDKSEEK) are disordered. Over residues 31-41 (EKENEQEDDDK) the composition is skewed to acidic residues. Phe-65 carries the phenylalanine amide modification.

In terms of tissue distribution, expressed by the skin glands.

It is found in the secreted. Its function is as follows. Has antibacterial activity against the Gram-negative bacteria E.coli ATCC 11775 (MIC=7.2 uM), and the Gram-positive bacteria S.aureus ATCC 12600 (MIC=3.6 uM) and M.luteus ATCC 49732 (MIC=1.8 uM). Does not inhibit the growth of the fungus C.albicans. The protein is Phylloseptin-Az2 of Pithecopus azureus (Orange-legged monkey tree frog).